The sequence spans 245 residues: tRNA pseudouridine synthase A (245 aa).

Asp52 serves as the catalytic Nucleophile. Residue Tyr111 participates in substrate binding.

Belongs to the tRNA pseudouridine synthase TruA family. In terms of assembly, homodimer.

The enzyme catalyses uridine(38/39/40) in tRNA = pseudouridine(38/39/40) in tRNA. Formation of pseudouridine at positions 38, 39 and 40 in the anticodon stem and loop of transfer RNAs. In Rickettsia prowazekii (strain Madrid E), this protein is tRNA pseudouridine synthase A.